Consider the following 331-residue polypeptide: DNA-directed RNA polymerase subunit alpha (331 aa).

The segment at 1 to 226 (MLIAQRPTLT…ELFGLCRELN (226 aa)) is alpha N-terminal domain (alpha-NTD). The alpha C-terminal domain (alpha-CTD) stretch occupies residues 243–331 (TNPEMAVPIE…GGTFFSPEDE (89 aa)).

It belongs to the RNA polymerase alpha chain family. As to quaternary structure, homodimer. The RNAP catalytic core consists of 2 alpha, 1 beta, 1 beta' and 1 omega subunit. When a sigma factor is associated with the core the holoenzyme is formed, which can initiate transcription.

The catalysed reaction is RNA(n) + a ribonucleoside 5'-triphosphate = RNA(n+1) + diphosphate. DNA-dependent RNA polymerase catalyzes the transcription of DNA into RNA using the four ribonucleoside triphosphates as substrates. This is DNA-directed RNA polymerase subunit alpha from Bifidobacterium longum (strain NCC 2705).